We begin with the raw amino-acid sequence, 397 residues long: Urea transporter 2 (397 aa).

Helical transmembrane passes span Val-68–Phe-85, Ala-92–Leu-109, Ala-115–Phe-135, Trp-143–Leu-163, and Leu-172–His-192. Asn-210 carries N-linked (GlcNAc...) asparagine glycosylation. 5 helical membrane passes run Trp-239 to Leu-257, Thr-264 to Ile-280, Phe-287 to Ile-303, Leu-309 to Leu-329, and Val-331 to Leu-351.

It belongs to the urea transporter family. As to expression, kidney.

Its subcellular location is the apical cell membrane. It is found in the basolateral cell membrane. It carries out the reaction urea(in) = urea(out). Inhibited by urea analogs and phloretin. In terms of biological role, mediates the transport of urea driven by a concentration gradient across the cell membrane of the renal inner medullary collecting duct which is critical to the urinary concentrating mechanism. The sequence is that of Urea transporter 2 (SLC14A2) from Oryctolagus cuniculus (Rabbit).